We begin with the raw amino-acid sequence, 324 residues long: Beta-ketoacyl-[acyl-carrier-protein] synthase III (324 aa).

Active-site residues include C113 and H251. An ACP-binding region spans residues 252 to 256; the sequence is QANKR. N281 is an active-site residue.

Belongs to the thiolase-like superfamily. FabH family. Homodimer.

Its subcellular location is the cytoplasm. The catalysed reaction is malonyl-[ACP] + acetyl-CoA + H(+) = 3-oxobutanoyl-[ACP] + CO2 + CoA. It participates in lipid metabolism; fatty acid biosynthesis. Catalyzes the condensation reaction of fatty acid synthesis by the addition to an acyl acceptor of two carbons from malonyl-ACP. Catalyzes the first condensation reaction which initiates fatty acid synthesis and may therefore play a role in governing the total rate of fatty acid production. Possesses both acetoacetyl-ACP synthase and acetyl transacylase activities. Its substrate specificity determines the biosynthesis of branched-chain and/or straight-chain of fatty acids. The polypeptide is Beta-ketoacyl-[acyl-carrier-protein] synthase III (Bartonella tribocorum (strain CIP 105476 / IBS 506)).